A 338-amino-acid chain; its full sequence is Lipoate-protein ligase A (338 aa).

The 188-residue stretch at P29–V216 folds into the BPL/LPL catalytic domain. ATP contacts are provided by residues R71, G76 to F79, and K134. K134 serves as a coordination point for (R)-lipoate.

It belongs to the LplA family. In terms of assembly, monomer.

It is found in the cytoplasm. The catalysed reaction is L-lysyl-[lipoyl-carrier protein] + (R)-lipoate + ATP = N(6)-[(R)-lipoyl]-L-lysyl-[lipoyl-carrier protein] + AMP + diphosphate + H(+). Its pathway is protein modification; protein lipoylation via exogenous pathway; protein N(6)-(lipoyl)lysine from lipoate: step 1/2. It functions in the pathway protein modification; protein lipoylation via exogenous pathway; protein N(6)-(lipoyl)lysine from lipoate: step 2/2. Functionally, catalyzes both the ATP-dependent activation of exogenously supplied lipoate to lipoyl-AMP and the transfer of the activated lipoyl onto the lipoyl domains of lipoate-dependent enzymes. This chain is Lipoate-protein ligase A, found in Salmonella schwarzengrund (strain CVM19633).